The sequence spans 419 residues: Bilin biosynthesis protein CpeY (419 aa).

Involved in the biosynthesis of bilin. The protein is Bilin biosynthesis protein CpeY (cpeY) of Synechococcus sp. (strain WH8020).